The sequence spans 77 residues: uncharacterized protein (77 aa).

The helical transmembrane segment at 57 to 76 (NSAVICTLIANLMAFFMLLT) threads the bilayer.

It localises to the membrane. This is an uncharacterized protein from Schizosaccharomyces pombe (strain 972 / ATCC 24843) (Fission yeast).